Reading from the N-terminus, the 232-residue chain is Large ribosomal subunit protein uL1 (232 aa).

Belongs to the universal ribosomal protein uL1 family. Part of the 50S ribosomal subunit.

Functionally, binds directly to 23S rRNA. The L1 stalk is quite mobile in the ribosome, and is involved in E site tRNA release. Protein L1 is also a translational repressor protein, it controls the translation of the L11 operon by binding to its mRNA. The polypeptide is Large ribosomal subunit protein uL1 (Stenotrophomonas maltophilia (strain R551-3)).